Reading from the N-terminus, the 467-residue chain is Prenyltransferase GME11375 (467 aa).

Residue E93 coordinates L-tryptophan. 6 residues coordinate dimethylallyl diphosphate: R108, K196, Y198, K266, Y268, and Y436.

It belongs to the tryptophan dimethylallyltransferase family.

It functions in the pathway secondary metabolite biosynthesis. In terms of biological role, prenyltransferase; part of the gene cluster that mediates the biosynthesis of dibenzodioxocinones such as pestalotiollide B, a novel class of inhibitors against cholesterol ester transfer protein (CEPT). The biosynthesis initiates from condensation of acetate and malonate units catalyzed by the non-reducing PKS pks8/GME11356. Pks8/GME11356 lacks a thioesterase (TE) domain, which is important to the cyclizing of the third ring of atrochrysone carboxylic acid, and the esterase GME11355 might play the role of TE and catalyzes the cyclization reaction of the C ring. The lactamase-like protein GME11357 (or other beta-lactamases in Pestalotiopsis microspora) probably hydrolyzes the thioester bond between the ACP of pks8/GME11356 and the intermediate to release atrochrysone carboxylic acid, which is spontaneously dehydrates to form endocrocin anthrone. Endocrocin anthrone is further converted to emodin via the endocrocin intermediate. Emodin is then oxidized by several enzymes such as the Baeyer-Villiger oxidase GME11358, the oxidoreductase GME11367, the short chain dehydrogenase/reductase GME11373, as well as by other oxidoreductases from the cluster, to modify the A and C rings and open the B ring, and finally yield monodictyphenone. The prenyltransferase GME11375 may catalyze the addition reaction between the C5 side chains and the carbon bone of dibenzodioxocinones. The remaining biochemical reactions to the final product dibenzodioxocinones should be methylation catalyzed by methyltransferase GME11366 and reduction and lactonization reaction catalyzed by a series of oxidordeuctases. The chain is Prenyltransferase GME11375 from Pestalotiopsis microspora.